The primary structure comprises 167 residues: Protein MIX23 (167 aa).

Residues 81–108 are disordered; the sequence is QLDQDRNTSKSPLKSQQQLPSSSTTQVS. Residues 89–106 show a composition bias toward low complexity; the sequence is SKSPLKSQQQLPSSSTTQ.

Belongs to the MIX23 family.

The protein is Protein MIX23 (cid2) of Schizosaccharomyces pombe (strain 972 / ATCC 24843) (Fission yeast).